The following is a 337-amino-acid chain: Probable cytosolic iron-sulfur protein assembly protein Ciao1 (337 aa).

WD repeat units follow at residues 12–51 (GHRGRAWGAGWHPKGNVLATCGEDKTIRIWAEDASQRWVA), 58–97 (GHSRTIRDVAWSPCGQYLASASFDATVAIWDKKSGEFECN), 102–141 (GHENEVKSVSWSKSGSLLATCSRDKSVWVWEVAQEDEYEC), 147–186 (THTQDVKKVEWHPHEDILASASYDNTIKLYKEDLADSDWS), 193–232 (SHESTVWSISFDGSGNRLASCSDDQTVKIWQEYKPGNEFG), 251–290 (YHSRSVYDISWCKQSGLLATACGDDMVRIFKEVEGSSPHE), and 301–337 (AHSQDVNTVEWNPTVVGLLVTTSDDGDVKLWKYEPEE).

The protein belongs to the WD repeat CIA1 family.

Essential component of the cytosolic iron-sulfur (Fe/S) protein assembly machinery. Required for the maturation of extramitochondrial Fe/S proteins. In Aedes aegypti (Yellowfever mosquito), this protein is Probable cytosolic iron-sulfur protein assembly protein Ciao1.